Consider the following 23-residue polypeptide: Unknown protein NF016 from 2D-PAGE (23 aa).

The protein is Unknown protein NF016 from 2D-PAGE of Naegleria fowleri (Brain eating amoeba).